A 154-amino-acid polypeptide reads, in one-letter code: Large ribosomal subunit protein bL17 (154 aa).

The tract at residues 127–154 is disordered; sequence TAAKQDRAKRVKGSKKAETEKEGGESAE. The segment covering 141-154 has biased composition (basic and acidic residues); sequence KKAETEKEGGESAE.

Belongs to the bacterial ribosomal protein bL17 family. Part of the 50S ribosomal subunit. Contacts protein L32.

In Chlorobaculum parvum (strain DSM 263 / NCIMB 8327) (Chlorobium vibrioforme subsp. thiosulfatophilum), this protein is Large ribosomal subunit protein bL17.